A 496-amino-acid chain; its full sequence is Cytochrome P450 monooxygenase cle4 (496 aa).

The helical transmembrane segment at 12-34 (FFTSPFPLTVGILSISLSGVLWY) threads the bilayer. Cys435 is a binding site for heme.

This sequence belongs to the cytochrome P450 family. Heme serves as cofactor.

It is found in the membrane. It functions in the pathway secondary metabolite biosynthesis; terpenoid biosynthesis. Functionally, cytochrome P450 monooxygenase; part of the cluster A that mediates the biosynthesis of chevalone E and its oxidized derivatives that possess a unique five-membered lactone ring and can synergistically enhance the cytotoxicity of doxorubicin (DOX) in breast cancer cells. Within the pathway, cle4 is involved in hydroxylation of the chavalone E scaffold at positions C-11 and C-12 and contributes with cle2 to the production of seven oxidation derivatives. The molecular scaffold is commonly biosynthesized by a series of enzymes including the non-reducing polyketide synthase (NR-PKS) cle1 that produces the alpha-pyrone triacetic acid lactone (TAL); The membrane-bound prenyltransferase cle5 that accepts TAL as its substrate to perform a C-3 geranylgeranylation reaction, in which the pathway-dedicated GGPS cle6 is required to provide GGPP, the other substrate of cle5; the FAD-dependent monooxygenase Cle3 that forms an (S)-epoxide ring at the terminal olefin of the geranylgeranyl group; and the terpene cyclase Cle7 that catalyzes the cyclization of the prenyl group that yields the pentacyclic pathway intermediate chevalone E. Chevalone E can derivatize into seven new oxidized analogs by the cytochrome P450 monooxygenases cle2 (acting at C-20) and cle4 (acting at C-11 and C-12). The sequence is that of Cytochrome P450 monooxygenase cle4 from Aspergillus versicolor.